A 250-amino-acid chain; its full sequence is Lymphocyte function-associated antigen 3 (250 aa).

A signal peptide spans Met1–Cys28. Topologically, residues Phe29 to Arg215 are extracellular. The region spanning Ser30–Leu121 is the Ig-like domain. Residues Asn40, Asn94, Asn109, Asn135, Asn169, and Asn195 are each glycosylated (N-linked (GlcNAc...) asparagine). An intrachain disulfide couples Cys142 to Cys187. The helical transmembrane segment at Tyr216 to Leu238 threads the bilayer. Topologically, residues Lys239–Asn250 are cytoplasmic.

As to quaternary structure, interacts with CD2. Interacts with CMTM6. (Microbial infection) Interacts with human cytomegalovirus protein UL148; this interaction retains immature CD58 intracellularly.

It is found in the cell membrane. Its function is as follows. Ligand of the T-lymphocyte CD2 glycoprotein. This interaction is important in mediating thymocyte interactions with thymic epithelial cells, antigen-independent and -dependent interactions of T-lymphocytes with target cells and antigen-presenting cells and the T-lymphocyte rosetting with erythrocytes. In addition, the LFA-3/CD2 interaction may prime response by both the CD2+ and LFA-3+ cells. The chain is Lymphocyte function-associated antigen 3 (CD58) from Homo sapiens (Human).